Consider the following 357-residue polypeptide: Homoarginine-6-hydroxylase 2-ODD-C23.2 (357 aa).

The region spanning 208 to 308 (PFWVMRIIGY…RVCVAFFYET (101 aa)) is the Fe2OG dioxygenase domain. Fe cation contacts are provided by histidine 231, aspartate 233, and histidine 289. Arginine 299 provides a ligand contact to 2-oxoglutarate.

This sequence belongs to the iron/ascorbate-dependent oxidoreductase family. It depends on Fe(2+) as a cofactor. Expressed in senescent leaves.

The protein resides in the cytoplasm. It localises to the cytosol. It carries out the reaction L-homoarginine + 2-oxoglutarate + O2 = 6-hydroxy-L-homoarginine + succinate + CO2. The catalysed reaction is L-arginine + 2-oxoglutarate + O2 = 5-hydroxy-L-arginine + succinate + CO2. Slightly inhibited by canavanine (Can), the 5-oxa-analog of arginine. 2-oxoglutarate-dependent dioxygenase catalyzing homoarginine 6-hydroxylation and arginine-5-hydroxylation thus producing 6-hydroxy-L-homoarginine and 5-hydroxy-L-arginine, respectively. Guanidine (Gd) is in turn synthesized by the spontaneous conversion of 6-hydroxy-L-homoarginine and 5-hydroxy-L-arginine to (S)-2-amino-6-oxohexanoate (RHEA:79843) and L-glutamate 5-semialdehyde (RHEA:31527); guanidine is a nitrogen-rich compound that may serve as a defense or signaling substance. The protein is Homoarginine-6-hydroxylase 2-ODD-C23.2 of Arabidopsis thaliana (Mouse-ear cress).